The chain runs to 238 residues: MTTSAVKVLIHGASGRMGKALLRLAAEDQTLQVVGAVVGRSPSQRVVDGVPFFAASELGGAPAFDVAIDFSLPQGFAPILALCAQRGKPLVSGTTGLDEAQRAALRDAAQQIALVWASNFSLGVAVLTELVERAAGTLPGWDCDILEAHHVHKQDAPSGTALTLGEAATGSGAQPRYVSLRAGDIVGEHTVQFTGLGERVELVHRATNRDIFARGALHAAKLLIGKPAGSYRVRDLVL.

12-17 (GASGRM) provides a ligand contact to NAD(+). Residue Arg-40 coordinates NADP(+). NAD(+)-binding positions include 93–95 (GTT) and 117–120 (ASNF). The Proton donor/acceptor role is filled by His-149. His-150 is a binding site for (S)-2,3,4,5-tetrahydrodipicolinate. Catalysis depends on Lys-153, which acts as the Proton donor. Residue 159–160 (GT) coordinates (S)-2,3,4,5-tetrahydrodipicolinate.

The protein belongs to the DapB family.

The protein resides in the cytoplasm. It carries out the reaction (S)-2,3,4,5-tetrahydrodipicolinate + NAD(+) + H2O = (2S,4S)-4-hydroxy-2,3,4,5-tetrahydrodipicolinate + NADH + H(+). The enzyme catalyses (S)-2,3,4,5-tetrahydrodipicolinate + NADP(+) + H2O = (2S,4S)-4-hydroxy-2,3,4,5-tetrahydrodipicolinate + NADPH + H(+). Its pathway is amino-acid biosynthesis; L-lysine biosynthesis via DAP pathway; (S)-tetrahydrodipicolinate from L-aspartate: step 4/4. Its function is as follows. Catalyzes the conversion of 4-hydroxy-tetrahydrodipicolinate (HTPA) to tetrahydrodipicolinate. The chain is 4-hydroxy-tetrahydrodipicolinate reductase from Xanthomonas euvesicatoria pv. vesicatoria (strain 85-10) (Xanthomonas campestris pv. vesicatoria).